Here is a 614-residue protein sequence, read N- to C-terminus: Probable ATP-dependent RNA helicase DDX5 (614 aa).

Basic and acidic residues predominate over residues 1-15 (MSSYSSDRDRGRDRG). The segment at 1–39 (MSSYSSDRDRGRDRGFGAPRFGGSRTGPLSGKKFGNPGE) is disordered. Ser-24 is modified (phosphoserine). N6-acetyllysine; alternate is present on Lys-32. Residue Lys-32 forms a Glycyl lysine isopeptide (Lys-Gly) (interchain with G-Cter in SUMO2); alternate linkage. Lys-33 and Lys-40 each carry N6-acetyllysine. Lys-45 participates in a covalent cross-link: Glycyl lysine isopeptide (Lys-Gly) (interchain with G-Cter in SUMO2). Lys-53 participates in a covalent cross-link: Glycyl lysine isopeptide (Lys-Gly) (interchain with G-Cter in SUMO2); alternate. Lys-53 is covalently cross-linked (Glycyl lysine isopeptide (Lys-Gly) (interchain with G-Cter in SUMO); alternate). Residue Lys-53 forms a Glycyl lysine isopeptide (Lys-Gly) (interchain with G-Cter in SUMO1); alternate linkage. Residues 94–122 (LNFYEANFPANVMDVIARQNFTEPTAIQA) carry the Q motif motif. ATP is bound by residues 114–116 (FTE), Gln-121, and 138–145 (AQTGSGKT). The 176-residue stretch at 125–300 (WPVALSGLDM…EDFLKDYIHI (176 aa)) folds into the Helicase ATP-binding domain. Lys-236 carries the N6-acetyllysine modification. The short motif at 248-251 (DEAD) is the DEAD box element. The residue at position 297 (Tyr-297) is a Phosphotyrosine. The Helicase C-terminal domain maps to 328-475 (KLIRLMEEIM…AINPKLLQLV (148 aa)). Residues Lys-340, Lys-343, Lys-388, Lys-391, Lys-411, Lys-437, Lys-451, and Lys-470 each participate in a glycyl lysine isopeptide (Lys-Gly) (interchain with G-Cter in SUMO2) cross-link. Residues 477-504 (DRGSGRSRGRGGMKDDRRDRYSAGKRGG) are disordered. The transactivation domain stretch occupies residues 477–614 (DRGSGRSRGR…GYPMPTGYSQ (138 aa)). At Ser-480 the chain carries Phosphoserine. Positions 488 to 498 (GMKDDRRDRYS) are enriched in basic and acidic residues. Lys-523 is covalently cross-linked (Glycyl lysine isopeptide (Lys-Gly) (interchain with G-Cter in SUMO2)).

It belongs to the DEAD box helicase family. DDX5/DBP2 subfamily. Identified in the spliceosome C complex. Component of a ribonucleoprotein complex containing mRNAs and RNA-binding proteins including DDX5, HNRNPH2 and SRSF1 as well as splicing regulator ARVCF. Interacts with RBM4; the interaction occurs in an RNA-independent manner. Interacts with AGO1 and AGO2. Interacts with ESR1, AR, EP300, CREBBP, POLR2A, TP53, RUNX2 and HDAC1. Self-associates. Interacts with DDX17. Interacts with BRDT. The large PER complex involved in the repression of transcriptional termination is composed of at least PER2, CDK9, DDX5, DHX9, NCBP1 and POLR2A (active). Interacts with DHX36; this interaction occurs in a RNA-dependent manner. Interacts with NUPR1. Interacts with ERCC6. Interacts with DDX3X in the cytoplasm; this interaction may be more efficient when both proteins are unphosphorylated. Sumoylated; sumoylation, promoted by PIAS1, promotes interaction with HDAC1 and transcriptional repression activity. Sumoylation also significantly increases stability, and reduces polyubiquitination. In terms of processing, polyubiquitinated, leading to proteasomal degradation. Post-translationally, weakly phosphorylated in the G1/S phase of the cell cycle and much more at G2/M, especially at Thr and Tyr residues.

The protein localises to the nucleus. Its subcellular location is the nucleolus. The protein resides in the cytoplasm. The catalysed reaction is ATP + H2O = ADP + phosphate + H(+). Its function is as follows. Involved in the alternative regulation of pre-mRNA splicing; its RNA helicase activity is necessary for increasing tau exon 10 inclusion and occurs in a RBM4-dependent manner. Binds to the tau pre-mRNA in the stem-loop region downstream of exon 10. The rate of ATP hydrolysis is highly stimulated by single-stranded RNA. Involved in transcriptional regulation; the function is independent of the RNA helicase activity. Transcriptional coactivator for androgen receptor AR but probably not ESR1. Synergizes with DDX17 and SRA1 RNA to activate MYOD1 transcriptional activity and involved in skeletal muscle differentiation. Transcriptional coactivator for p53/TP53 and involved in p53/TP53 transcriptional response to DNA damage and p53/TP53-dependent apoptosis. Transcriptional coactivator for RUNX2 and involved in regulation of osteoblast differentiation. Acts as a transcriptional repressor in a promoter-specific manner; the function probably involves association with histone deacetylases, such as HDAC1. As component of a large PER complex is involved in the inhibition of 3' transcriptional termination of circadian target genes such as PER1 and NR1D1 and the control of the circadian rhythms. In Mus musculus (Mouse), this protein is Probable ATP-dependent RNA helicase DDX5 (Ddx5).